The chain runs to 521 residues: Protein DETOXIFICATION 44, chloroplastic (521 aa).

The N-terminal 31 residues, 1 to 31, are a transit peptide targeting the chloroplast; sequence MAAVATSFCFSPHRSPSRFGNPNSSIRRTIV. The segment at 12-73 is disordered; sequence PHRSPSRFGN…DHDHKPDPGI (62 aa). 2 stretches are compositionally biased toward polar residues: residues 18–27 and 42–61; these read RFGNPNSSIR and AVSTSSQRPEKQQNPLTSQN. 12 helical membrane passes run 80–100, 103–123, 167–187, 213–235, 242–262, 268–288, 314–334, 345–365, 385–405, 423–443, 454–474, and 481–503; these read IMSIALPAALALAADPITSLV, AFVGHIGSAELAAVGVSVSVF, VSTSLVLAAGVGIAEAIALSL, RLRAYGAPPIVVALAAQGAFRGF, LYAVVAGNVLNAVLDPILIFV, SGAAAATVISEYLIAFILLWK, LLIGRTVALLVPFTLATSLAA, QIVLEIWLAVSLLTDALAIAA, LFGVLQVGLATGTGLAAVLFI, IALSGTLFVAGSQPVNALAFV, FGFAAYSMVIVGFISSLFMLV, and LAGIWTGLFLFMALRLVAGAWRL.

This sequence belongs to the multi antimicrobial extrusion (MATE) (TC 2.A.66.1) family. In terms of tissue distribution, expressed in shoots.

Its subcellular location is the plastid. It localises to the chloroplast membrane. This is Protein DETOXIFICATION 44, chloroplastic from Arabidopsis thaliana (Mouse-ear cress).